The following is an 806-amino-acid chain: MFVSYRWLQEYVDIKDVTAQELADKITKSGIEVEGVEVLNKGVKGVVVGHVLECEKHPEADKLSKCLIDIGEEEPVQIICGAANIAKGLKVPVAKVGAVLPGNFKIKKAKLRGEASHGMVCALQELGIDGKLVSKEYADGIFIFPSDAEVGADALEILNLHDEVLELGLTPNRADCLNMLGVAYEVAAIYGREVKLPAIDLQETAEKTSDYISVSVEAKEENPLYIAKMVKNVKIGPSPMWMQTRLMAAGIRPISNVVDITNYILMEYGQPLHAFDYDKLGSKEIVVRLAKEGEKIETLDDQERTLQSHHLVITNGTKALAVAGVMGGADSEVTNETVNVLIESAYFAGQTVRRTSKDLGLRSESSARFEKGIDPTRTFEAIQHAAALMAKYAGGEALEGVVEADNLQVQERTVSVTAEKVNRVLGTNISASEMGTMFTNLKFPFTEVEGTFHVNVPARRPDITISEDLVEEVGRLYGYDHIPVTLPSGTMTRGKLTSAQTKRRKVRRFLEGAGLYEAITYSLTSADKAKQYMVEPNEKAPVGLALPMSEERSQLRLSLVPQLLEAVSYNVARKNDSVALYEVGSIFLPTEEGELPKEEQHLAGVMTGLALHHAWQGEKKVVDFFVVKGVLEGLFDVLGVANQITYAPAKREGMHPGRTADIVLDGEVIGFIGQLHPEAEKQLDVKNTFVFELSLVKVFGADAEETYYAAIPRFPSMTRDMAVVVTKETKAGEMKQVIAEAGGELLKDVTLFDLYEGEKMEEGKKSLAFSMTYFDAERTLTDEEVTEAHNRVLTTVEEKFGAELRK.

One can recognise a tRNA-binding domain in the interval 40–155; sequence NKGVKGVVVG…SDAEVGADAL (116 aa). The region spanning 409–484 is the B5 domain; it reads VQERTVSVTA…RLYGYDHIPV (76 aa). Residues D462, D468, E471, and E472 each contribute to the Mg(2+) site. Residues 712–805 enclose the FDX-ACB domain; it reads PRFPSMTRDM…VEEKFGAELR (94 aa).

The protein belongs to the phenylalanyl-tRNA synthetase beta subunit family. Type 1 subfamily. Tetramer of two alpha and two beta subunits. It depends on Mg(2+) as a cofactor.

The protein resides in the cytoplasm. The enzyme catalyses tRNA(Phe) + L-phenylalanine + ATP = L-phenylalanyl-tRNA(Phe) + AMP + diphosphate + H(+). This chain is Phenylalanine--tRNA ligase beta subunit, found in Bacillus cereus (strain ATCC 14579 / DSM 31 / CCUG 7414 / JCM 2152 / NBRC 15305 / NCIMB 9373 / NCTC 2599 / NRRL B-3711).